The chain runs to 253 residues: Acidic endochitinase pcht28 (253 aa).

The first 24 residues, 1–24 (MKFNIVSPVALSCLFFLFLTGTLA), serve as a signal peptide directing secretion. E92 functions as the Proton donor in the catalytic mechanism. A disulfide bond links C212 and C244.

It belongs to the glycosyl hydrolase 19 family. Chitinase class II subfamily.

The protein resides in the secreted. The protein localises to the extracellular space. The catalysed reaction is Random endo-hydrolysis of N-acetyl-beta-D-glucosaminide (1-&gt;4)-beta-linkages in chitin and chitodextrins.. Defense against chitin-containing fungal pathogens. This Solanum chilense (Tomato) protein is Acidic endochitinase pcht28.